A 269-amino-acid polypeptide reads, in one-letter code: GTP cyclohydrolase FolE2 (269 aa).

It belongs to the GTP cyclohydrolase IV family.

The catalysed reaction is GTP + H2O = 7,8-dihydroneopterin 3'-triphosphate + formate + H(+). The protein operates within cofactor biosynthesis; 7,8-dihydroneopterin triphosphate biosynthesis; 7,8-dihydroneopterin triphosphate from GTP: step 1/1. Functionally, converts GTP to 7,8-dihydroneopterin triphosphate. The protein is GTP cyclohydrolase FolE2 of Burkholderia mallei (strain NCTC 10229).